The sequence spans 596 residues: Adenine deaminase (596 aa).

Belongs to the metallo-dependent hydrolases superfamily. Adenine deaminase family. Mn(2+) is required as a cofactor.

The enzyme catalyses adenine + H2O + H(+) = hypoxanthine + NH4(+). The polypeptide is Adenine deaminase (Moorella thermoacetica (strain ATCC 39073 / JCM 9320)).